Consider the following 281-residue polypeptide: sn-glycerol-3-phosphate transport system permease protein UgpE (281 aa).

6 helical membrane-spanning segments follow: residues 16–36 (LILGIAVILFPLYVAFVAATL), 85–105 (FSITLGKITVSMLSAFAIVWF), 113–133 (FFWMIFITLMLPVEVRIFPTV), 142–162 (LDSYAGLTLPLMASATATFLF), 202–222 (ALFVITFIYGWNQYLWPLLII), and 247–267 (WNSVMAAMLLTLIPPVVIVLV). Positions 77-268 (LLNSFVMAFS…IPPVVIVLVM (192 aa)) constitute an ABC transmembrane type-1 domain.

It belongs to the binding-protein-dependent transport system permease family. UgpAE subfamily. As to quaternary structure, the complex is composed of two ATP-binding proteins (UgpC), two transmembrane proteins (UgpA and UgpE) and a solute-binding protein (UgpB).

It localises to the cell inner membrane. Part of the ABC transporter complex UgpBAEC involved in sn-glycerol-3-phosphate (G3P) import. Probably responsible for the translocation of the substrate across the membrane. This Shigella dysenteriae serotype 1 (strain Sd197) protein is sn-glycerol-3-phosphate transport system permease protein UgpE (ugpE).